A 66-amino-acid polypeptide reads, in one-letter code: MSQEKLKSKLDQAKGGAKEGFGKITGDKELEAKGFIEKTIAKGKELADDAKDAVEGAVDAVKEKLK.

Residues 1 to 22 form a disordered region; the sequence is MSQEKLKSKLDQAKGGAKEGFG.

The protein belongs to the UPF0337 (CsbD) family.

The polypeptide is UPF0337 protein SAG0619 (Streptococcus agalactiae serotype V (strain ATCC BAA-611 / 2603 V/R)).